A 183-amino-acid polypeptide reads, in one-letter code: DELTA-miturgitoxin-Cp1c (183 aa).

The N-terminal stretch at 1–20 (MKFSLFFSVFFLAVLHACLS) is a signal peptide. Positions 21–47 (ESEIDLEDEEHFMSSDSFLSEIQDESR) are excised as a propeptide. Positions 44–47 (DESR) match the Processing quadruplet motif motif. 8 disulfide bridges follow: Cys51–Cys66, Cys58–Cys75, Cys65–Cys88, Cys77–Cys86, Cys115–Cys130, Cys122–Cys139, Cys129–Cys157, and Cys141–Cys155. The segment at 164–177 (QAIEGALRIAKKLI) is predicted alpha-helix. Position 181 is a tryptophan amide (Trp181).

Belongs to the neurotoxin 19 (CSTX) family. Double-CSTX subfamily. In terms of processing, cleavage of the propeptide depends on the processing quadruplet motif (XXXR, with at least one of X being E). Expressed by the venom gland.

Its subcellular location is the secreted. It is found in the target cell membrane. In terms of biological role, spider venom toxin that exhibits cytolytic activity by forming an alpha-helix across the membrane. Lethal to insect larvae. Causes instant paralysis and death in the larvae of the flesh fly (S.carnaria) at doses of 20 ug/g, at doses of less than 10 ug/g causes reversible paralysis. Has cytolytic activity against insect Sf9 cells. Causes stable and irreversible depolarization of fly muscle fibers, leading to contracture at higher toxin concentrations. Destabilizes membranes. The chain is DELTA-miturgitoxin-Cp1c from Cheiracanthium punctorium (Yellow sac spider).